A 288-amino-acid polypeptide reads, in one-letter code: MKPSGEDQAALAAGPWEECFQAAVQLALRAGQIIRKALTEEKRVSTKTSAADLVTETDHLVEDLIISELRERFPSHRFIAEEAAASGAKCVLTHSPTWIIDPIDGTCNFVHRFPTVAVSIGFAVRQELEFGVIYHCTEERLYTGRRGRGAFCNGQRLRVSGETDLSKALVLTEIGPKRDPATLKLFLSNMERLLHAKAHGVRVIGSSTLALCHLASGAADAYYQFGLHCWDLAAATVIIREAGGIVIDTSGGPLDLMACRVVAASTREMAMLIAQALQTINYGRDDEK.

Mg(2+)-binding residues include glutamate 81, aspartate 101, isoleucine 103, and aspartate 104. A substrate-binding site is contributed by glutamate 81. Residues 103-106 (IDGT), 205-207 (GSS), glutamine 224, and aspartate 231 each bind substrate. Aspartate 231 contributes to the Mg(2+) binding site.

Belongs to the inositol monophosphatase superfamily. In terms of assembly, homodimer. Mg(2+) is required as a cofactor.

It is found in the cytoplasm. The catalysed reaction is a myo-inositol phosphate + H2O = myo-inositol + phosphate. It catalyses the reaction 1D-myo-inositol 1-phosphate + H2O = myo-inositol + phosphate. It carries out the reaction 1D-myo-inositol 2-phosphate + H2O = myo-inositol + phosphate. The enzyme catalyses 1D-myo-inositol 3-phosphate + H2O = myo-inositol + phosphate. The catalysed reaction is 1D-myo-inositol 4-phosphate + H2O = myo-inositol + phosphate. It catalyses the reaction 1D-myo-inositol 5-phosphate + H2O = myo-inositol + phosphate. It carries out the reaction 1D-myo-inositol 6-phosphate + H2O = myo-inositol + phosphate. The enzyme catalyses alpha-D-glucose 1-phosphate + H2O = D-glucose + phosphate. The catalysed reaction is glycerol 2-phosphate + H2O = glycerol + phosphate. It catalyses the reaction adenosine 2'-phosphate + H2O = adenosine + phosphate. It functions in the pathway polyol metabolism; myo-inositol biosynthesis; myo-inositol from D-glucose 6-phosphate: step 2/2. Its activity is regulated as follows. Inhibited by high Li(+) and restricted Mg(2+) concentrations. Functionally, phosphatase that can use myo-inositol monophosphates, myo-inositol 1,4-diphosphate, scyllo-inositol-1,4-diphosphate, glucose-1-phosphate, beta-glycerophosphate and 2'-AMP as substrates in vitro. It is likely that IMPA2 has an as yet unidentified in vivo substrate(s). Has been implicated as the pharmacological target for lithium (Li(+)) action in brain. This is Inositol monophosphatase 2 from Homo sapiens (Human).